The following is a 182-amino-acid chain: Dynactin subunit 5 (182 aa).

An N-acetylmethionine modification is found at Met1.

The protein belongs to the dynactin subunits 5/6 family. Dynactin subunit 5 subfamily. Subunit of dynactin, a multiprotein complex part of a tripartite complex with dynein and a adapter, such as BICDL1, BICD2 or HOOK3. The dynactin complex is built around ACTR1A/ACTB filament and consists of an actin-related filament composed of a shoulder domain, a pointed end and a barbed end. Its length is defined by its flexible shoulder domain. The soulder is composed of 2 DCTN1 subunits, 4 DCTN2 and 2 DCTN3. The 4 DCNT2 (via N-terminus) bind the ACTR1A filament and act as molecular rulers to determine the length. The pointed end is important for binding dynein-dynactin cargo adapters. Consists of 4 subunits: ACTR10, DCNT4, DCTN5 and DCTN6. Within the complex DCTN6 forms a heterodimer with DCTN5. The barbed end is composed of a CAPZA1:CAPZB heterodimers, which binds ACTR1A/ACTB filament and dynactin and stabilizes dynactin. Interacts with N4BP2L1.

Its subcellular location is the cytoplasm. The protein localises to the cytoskeleton. It localises to the chromosome. The protein resides in the centromere. It is found in the kinetochore. Its function is as follows. Part of the dynactin complex that activates the molecular motor dynein for ultra-processive transport along microtubules. This is Dynactin subunit 5 (DCTN5) from Pongo abelii (Sumatran orangutan).